The following is a 512-amino-acid chain: Intermediate filament family orphan 2 (512 aa).

An IF rod domain is found at 50 to 479; sequence NIHLLKGLNV…RLIKGSADRN (430 aa). Residues 473–512 form a disordered region; it reads KGSADRNSPSPSSVASSDSGSTDEIQEDLEREADVEPMVS. The segment covering 480–492 has biased composition (low complexity); that stretch reads SPSPSSVASSDSG. The segment covering 496–512 has biased composition (acidic residues); that stretch reads EIQEDLEREADVEPMVS.

The protein belongs to the intermediate filament family.

In Mus musculus (Mouse), this protein is Intermediate filament family orphan 2 (Iffo2).